The sequence spans 671 residues: Probable boron transporter 6 (671 aa).

The Cytoplasmic segment spans residues 1–37; that stretch reads MKSEGESGPFQGILRDIEGRRKCYKQDWIRGIKTGIR. A helical membrane pass occupies residues 38–58; it reads ILAPTCYIFFASSLPVVAFGE. Topologically, residues 59–77 are extracellular; it reads QLSKHTGGALSAVETLAST. The chain crosses the membrane as a helical span at residues 78–98; it reads SICGIIHAIFGGQPLLIVGVA. At 99 to 123 the chain is on the cytoplasmic side; sequence EPTIIMYTYLYSFCISRPDIGRELY. Residues 124–144 form a helical membrane-spanning segment; it reads LAWVAWVCVWTSVLLILLSIF. Over 145 to 157 the chain is Extracellular; it reads NAGTIITRFTRIA. Residues 158–178 form a helical membrane-spanning segment; that stretch reads GELFGMLIAVLFLQEAIKGLI. The Cytoplasmic portion of the chain corresponds to 179–195; sequence SEFHAPEIKNQETGKSH. The helical transmembrane segment at 196-216 threads the bilayer; the sequence is FLLIYANGLLAVIFSLGLLIT. Residues 217-235 lie on the Extracellular side of the membrane; the sequence is ALKSRRAKSWKYGFGWLRS. The helical transmembrane segment at 236 to 256 threads the bilayer; the sequence is FIGDYGVPLMVLLWTALSYTV. The Cytoplasmic portion of the chain corresponds to 257–291; that stretch reads PSEVLPSVPRRLFCPLPWEPASLYHWTVVKDMGKV. The helical transmembrane segment at 292–312 threads the bilayer; it reads PIMYILAAFIPGVMIAGLYFF. Residues 313 to 332 lie on the Extracellular side of the membrane; that stretch reads DHSVASQMAQQKEFNLKNPS. Residues 333–353 form a helical membrane-spanning segment; that stretch reads AYHYDIFLLGIITLICGLLGL. The Cytoplasmic portion of the chain corresponds to 354-469; the sequence is PPSNGVLPQA…EQRVSNLLQS (116 aa). A helical transmembrane segment spans residues 470–490; that stretch reads VLVGLTLLAVTVIKMIPSSVL. Topologically, residues 491–557 are extracellular; the sequence is WGYFAYMAID…QLVYFLLCYG (67 aa). Residues 558 to 578 traverse the membrane as a helical segment; it reads MTWIPMAGIFFPALFFLLISI. Topologically, residues 579–671 are cytoplasmic; it reads REHLLPKLFD…EEKHVTFEPH (93 aa).

It belongs to the anion exchanger (TC 2.A.31.3) family.

Its subcellular location is the membrane. Functionally, probable boron transporter. Boron is essential for maintaining the integrity of plants cell walls. This chain is Probable boron transporter 6 (BOR6), found in Arabidopsis thaliana (Mouse-ear cress).